The sequence spans 591 residues: MSLIHLIYFPTILSLILGTEGTPALTYGNLADNQHGNEEQGDVDMYPLYECSKKGAGVSSNNWYGACRGACSMTKNTTDVHMEIYYRNDSVGWIDVLSIQTTEIWKHSHVTWYGECEHNTKYGSSNTAPVSVILERLEFLHNGMSSWPYGHSIHVHDTISSPDCSYFDDVSRSGWRLIISKRALELKSDIAGEGYIVDPDVGYVYPVADGIGKGRTWHVWKASSVPSSGCYFKSAGITNCTLLMDTFLYSCPSLNIAFSARVGKHIKSTCVGDMNISTDGVTYQTLGSTDQGSISTQLVSLWHQSQEALIQQLILTINEALGKIETSYCESTCDLTEMLISQHTEHPMVIETPVGPWLPYSIDGKVSVLPCQGGQDLVVIKPIEICASPFMLKVKSLKSLDTYWWVPTDSHVAPFTQCSNRDDEEMIIKIQRKKPLIFEFWRGAYKLDYPYNSSGIWLDNPGGHIHRSSKWFPTLDSLSYSSPINLPLISKGIRKHIQAIVSTTEITSGGNVTSWTHSISTIAEAMFDSAAIAAGRVVMWWYTLEESVKRYLTVAFGLVLTVITIWAMSKLFFRSSPTYARAPTNIEWVRS.

Residues 1 to 21 form the signal peptide; sequence MSLIHLIYFPTILSLILGTEG. The Virion surface segment spans residues 22–552; sequence TPALTYGNLA…TLEESVKRYL (531 aa). The helical transmembrane segment at 553–573 threads the bilayer; the sequence is TVAFGLVLTVITIWAMSKLFF. Residues 574–591 lie on the Intravirion side of the membrane; sequence RSSPTYARAPTNIEWVRS.

Belongs to the nucleorhabdovirus glycoprotein family. In terms of assembly, homotrimer. Interacts with matrix protein. Post-translationally, glycosylatedby host. Glycosylation is crucial for glycoprotein export at the cell surface.

The protein resides in the virion membrane. Functionally, attaches the virus to host cellular receptor, inducing endocytosis of the virion. In the endosome, the acidic pH induces conformational changes in the glycoprotein trimer, which trigger fusion between virus and cell membrane. The protein is Glycoprotein (G) of Rottboellia (Sorghum).